Reading from the N-terminus, the 514-residue chain is Citrate synthase 2, peroxisomal (514 aa).

Active-site residues include His324, His363, and Asp419.

This sequence belongs to the citrate synthase family. In terms of tissue distribution, widely expressed. Expressed throughout the shoot. Expressed in flower, silique, stem, cauline leaf, young leaf, mature leaf and senescent leaf.

Its subcellular location is the peroxisome. The catalysed reaction is oxaloacetate + acetyl-CoA + H2O = citrate + CoA + H(+). It participates in carbohydrate metabolism; tricarboxylic acid cycle; isocitrate from oxaloacetate: step 1/2. In terms of biological role, peroxisomal citrate synthase required for the fatty acid respiration in seedlings, citrate being exported from peroxisomes into mitochondria during respiration of triacylglycerol (TAG). Indeed, complete respiration requires the transfer of carbon in the form of citrate from the peroxisome to the mitochondria. In Arabidopsis thaliana (Mouse-ear cress), this protein is Citrate synthase 2, peroxisomal (CSY2).